A 69-amino-acid chain; its full sequence is Large ribosomal subunit protein bL31 (69 aa).

Zn(2+) is bound by residues C17, C19, C37, and C40.

It belongs to the bacterial ribosomal protein bL31 family. Type A subfamily. In terms of assembly, part of the 50S ribosomal subunit. The cofactor is Zn(2+).

Its function is as follows. Binds the 23S rRNA. This is Large ribosomal subunit protein bL31 from Caldanaerobacter subterraneus subsp. tengcongensis (strain DSM 15242 / JCM 11007 / NBRC 100824 / MB4) (Thermoanaerobacter tengcongensis).